We begin with the raw amino-acid sequence, 395 residues long: Formate-dependent phosphoribosylglycinamide formyltransferase (395 aa).

Residues 22–23 (EL) and E82 each bind N(1)-(5-phospho-beta-D-ribosyl)glycinamide. ATP is bound by residues R115, K156, 161–166 (SSGKGQ), 196–199 (EGFI), and E204. The 190-residue stretch at 120 to 309 (RLAAETLGLP…EFALHARAIL (190 aa)) folds into the ATP-grasp domain. Residues E268 and E280 each contribute to the Mg(2+) site. N(1)-(5-phospho-beta-D-ribosyl)glycinamide contacts are provided by residues D287, K356, and 363–364 (RR).

Belongs to the PurK/PurT family. In terms of assembly, homodimer.

The enzyme catalyses N(1)-(5-phospho-beta-D-ribosyl)glycinamide + formate + ATP = N(2)-formyl-N(1)-(5-phospho-beta-D-ribosyl)glycinamide + ADP + phosphate + H(+). It functions in the pathway purine metabolism; IMP biosynthesis via de novo pathway; N(2)-formyl-N(1)-(5-phospho-D-ribosyl)glycinamide from N(1)-(5-phospho-D-ribosyl)glycinamide (formate route): step 1/1. Its function is as follows. Involved in the de novo purine biosynthesis. Catalyzes the transfer of formate to 5-phospho-ribosyl-glycinamide (GAR), producing 5-phospho-ribosyl-N-formylglycinamide (FGAR). Formate is provided by PurU via hydrolysis of 10-formyl-tetrahydrofolate. This is Formate-dependent phosphoribosylglycinamide formyltransferase from Stenotrophomonas maltophilia (strain R551-3).